Reading from the N-terminus, the 430-residue chain is uncharacterized protein (430 aa).

This is an uncharacterized protein from Bos taurus (Bovine).